We begin with the raw amino-acid sequence, 339 residues long: Prepilin peptidase EppA (339 aa).

A run of 10 helical transmembrane segments spans residues 3 to 23 (LLNV…ITDI), 27 to 47 (IIPH…GYYY), 48 to 68 (FGFN…ILSI), 75 to 95 (VKLF…VFYI), 99 to 119 (ILYL…YKIL), 125 to 145 (DIIP…YFIN), 146 to 166 (IYEI…SIFV), 180 to 200 (LGYL…TYFI), 204 to 224 (VLLT…VIYA), and 319 to 339 (FVPF…LAII).

The protein belongs to the peptidase A24 family.

It localises to the cell membrane. Peptidase that processes the N-terminus of prepilins. This is Prepilin peptidase EppA from Methanocaldococcus jannaschii (strain ATCC 43067 / DSM 2661 / JAL-1 / JCM 10045 / NBRC 100440) (Methanococcus jannaschii).